The sequence spans 191 residues: Signal peptidase IB (191 aa).

Topologically, residues 1–7 are cytoplasmic; it reads MKKEILE. Residues 8–28 traverse the membrane as a helical segment; that stretch reads WIISIAVAFVILFIVGKFIVT. At 29–191 the chain is on the extracellular side; that stretch reads PYTIKGESMD…HNFNPENTKN (163 aa). Catalysis depends on residues S36 and K77.

Belongs to the peptidase S26 family.

The protein localises to the cell membrane. The catalysed reaction is Cleavage of hydrophobic, N-terminal signal or leader sequences from secreted and periplasmic proteins.. In terms of biological role, essential for cell viability. The sequence is that of Signal peptidase IB (spsB) from Staphylococcus aureus (strain COL).